The primary structure comprises 79 residues: RNA-binding protein Hfq (79 aa).

Residues 10-70 (DAFLNHVRKT…ISTIMPAQPI (61 aa)) form the Sm domain.

It belongs to the Hfq family. As to quaternary structure, homohexamer.

RNA chaperone that binds small regulatory RNA (sRNAs) and mRNAs to facilitate mRNA translational regulation in response to envelope stress, environmental stress and changes in metabolite concentrations. Also binds with high specificity to tRNAs. The polypeptide is RNA-binding protein Hfq (Ruegeria sp. (strain TM1040) (Silicibacter sp.)).